A 184-amino-acid chain; its full sequence is Holliday junction branch migration complex subunit RuvA (184 aa).

The domain I stretch occupies residues 1-64; that stretch reads MIKAIEGIIT…EDANLLYGFI (64 aa). A domain II region spans residues 65–137; the sequence is KESEQRIFEM…LSDAKFGEIN (73 aa). Position 137 (N137) is a region of interest, flexible linker. Positions 138–184 are domain III; that stretch reads SMPSYQNEAFMALESLGFKRDRISKVLNECSSNDTASLIKEALKKLA.

This sequence belongs to the RuvA family. Homotetramer. Forms an RuvA(8)-RuvB(12)-Holliday junction (HJ) complex. HJ DNA is sandwiched between 2 RuvA tetramers; dsDNA enters through RuvA and exits via RuvB. An RuvB hexamer assembles on each DNA strand where it exits the tetramer. Each RuvB hexamer is contacted by two RuvA subunits (via domain III) on 2 adjacent RuvB subunits; this complex drives branch migration. In the full resolvosome a probable DNA-RuvA(4)-RuvB(12)-RuvC(2) complex forms which resolves the HJ.

It localises to the cytoplasm. Its function is as follows. The RuvA-RuvB-RuvC complex processes Holliday junction (HJ) DNA during genetic recombination and DNA repair, while the RuvA-RuvB complex plays an important role in the rescue of blocked DNA replication forks via replication fork reversal (RFR). RuvA specifically binds to HJ cruciform DNA, conferring on it an open structure. The RuvB hexamer acts as an ATP-dependent pump, pulling dsDNA into and through the RuvAB complex. HJ branch migration allows RuvC to scan DNA until it finds its consensus sequence, where it cleaves and resolves the cruciform DNA. This is Holliday junction branch migration complex subunit RuvA from Campylobacter fetus subsp. fetus (strain 82-40).